The primary structure comprises 290 residues: Eukaryotic translation initiation factor 3 subunit G (290 aa).

Residues 1–34 (MSRLGNRAADWADDEEFDDPSALPAQQVTTNKDG) form a disordered region. The RRM domain maps to 210–288 (ATLRVTNVSE…LILRVEFAKR (79 aa)).

The protein belongs to the eIF-3 subunit G family. Component of the eukaryotic translation initiation factor 3 (eIF-3) complex.

It localises to the cytoplasm. RNA-binding component of the eukaryotic translation initiation factor 3 (eIF-3) complex, which is involved in protein synthesis of a specialized repertoire of mRNAs and, together with other initiation factors, stimulates binding of mRNA and methionyl-tRNAi to the 40S ribosome. The eIF-3 complex specifically targets and initiates translation of a subset of mRNAs involved in cell proliferation. This subunit can bind 18S rRNA. The polypeptide is Eukaryotic translation initiation factor 3 subunit G (Neosartorya fischeri (strain ATCC 1020 / DSM 3700 / CBS 544.65 / FGSC A1164 / JCM 1740 / NRRL 181 / WB 181) (Aspergillus fischerianus)).